The primary structure comprises 1785 residues: Brefeldin A-inhibited guanine nucleotide-exchange protein 2 (1785 aa).

N-acetylmethionine is present on methionine 1. The segment at 2 to 224 (QESQTKSMFV…KPQSPVIQAA (223 aa)) is DCB; DCB:DCB domain and DCB:HUS domain interaction. Serine 214, serine 218, and serine 227 each carry phosphoserine. A disordered region spans residues 232–285 (RLKHSQAQSKPTTPEKTDLTNGEHARSDSGKVSTENGDAPRERGSSLSGTDDGA). Threonine 244 bears the Phosphothreonine mark. Residues 244-260 (TPEKTDLTNGEHARSDS) show a composition bias toward basic and acidic residues. A phosphoserine mark is found at serine 277, serine 348, and serine 349. Residues 508-528 (ADAQCVVDIYVNYDCDLNAAN) are HUS; DCB:HUS domain interaction. A Phosphoserine modification is found at serine 614. Phosphothreonine is present on threonine 616. Phosphoserine is present on serine 617. At threonine 626 the chain carries Phosphothreonine. The 132-residue stretch at 654–785 (FNKKPKRGIQ…IIMLTTDLHS (132 aa)) folds into the SEC7 domain. Phosphoserine occurs at positions 700, 1511, 1513, 1514, 1525, 1528, 1534, and 1782. Residues 1514-1532 (SIDKNPSERGQSQLSNPTD) show a composition bias toward polar residues. Positions 1514-1535 (SIDKNPSERGQSQLSNPTDDSW) are disordered.

As to quaternary structure, homodimer. Interacts with ARFGEF1/BIG1; both proteins are probably part of the same or very similar macromolecular complexes. Interacts with PRKAR1A, PRKAR2A, PRKAR1B, PRKAR2B, PPP1CC, PDE3A, TNFRSF1A, MYCBP and EXOC7. Interacts with GABRB1, GABRB2 and GABRB3. In terms of processing, in vitro phosphorylated by PKA reducing its GEF activity and dephosphorylated by phosphatase PP1. Expressed in placenta, lung, heart, brain, kidney and pancreas.

It is found in the cytoplasm. The protein localises to the membrane. The protein resides in the golgi apparatus. It localises to the perinuclear region. Its subcellular location is the trans-Golgi network. It is found in the endosome. The protein localises to the cytoskeleton. The protein resides in the microtubule organizing center. It localises to the centrosome. Its subcellular location is the cell projection. It is found in the dendrite. The protein localises to the cytoplasmic vesicle. The protein resides in the synapse. Inhibited by brefeldin A. Functionally, promotes guanine-nucleotide exchange on ARF1 and ARF3 and to a lower extent on ARF5 and ARF6. Promotes the activation of ARF1/ARF5/ARF6 through replacement of GDP with GTP. Involved in the regulation of Golgi vesicular transport. Required for the integrity of the endosomal compartment. Involved in trafficking from the trans-Golgi network (TGN) to endosomes and is required for membrane association of the AP-1 complex and GGA1. Seems to be involved in recycling of the transferrin receptor from recycling endosomes to the plasma membrane. Probably is involved in the exit of GABA(A) receptors from the endoplasmic reticulum. Involved in constitutive release of tumor necrosis factor receptor 1 via exosome-like vesicles; the function seems to involve PKA and specifically PRKAR2B. Proposed to act as A kinase-anchoring protein (AKAP) and may mediate crosstalk between Arf and PKA pathways. The polypeptide is Brefeldin A-inhibited guanine nucleotide-exchange protein 2 (ARFGEF2) (Homo sapiens (Human)).